A 105-amino-acid chain; its full sequence is Insulin (105 aa).

The N-terminal stretch at 1–22 (MAFWLQAASLLVLLALSPGVDA) is a signal peptide. 3 disulfides stabilise this stretch: C29–C91, C41–C104, and C90–C95. Residues 53–82 (DVDPLIGFLSPKSAKENEEYPFKDQTEMMV) constitute a propeptide, c peptide.

Belongs to the insulin family. In terms of assembly, heterodimer of a B chain and an A chain linked by two disulfide bonds.

The protein localises to the secreted. Functionally, insulin decreases blood glucose concentration. It increases cell permeability to monosaccharides, amino acids and fatty acids. It accelerates glycolysis, the pentose phosphate cycle, and glycogen synthesis in liver. This is Insulin (ins) from Oncorhynchus keta (Chum salmon).